Here is a 356-residue protein sequence, read N- to C-terminus: Phenylalanine--tRNA ligase alpha subunit (356 aa).

Glu-258 is a binding site for Mg(2+).

Belongs to the class-II aminoacyl-tRNA synthetase family. Phe-tRNA synthetase alpha subunit type 1 subfamily. Tetramer of two alpha and two beta subunits. Requires Mg(2+) as cofactor.

Its subcellular location is the cytoplasm. The catalysed reaction is tRNA(Phe) + L-phenylalanine + ATP = L-phenylalanyl-tRNA(Phe) + AMP + diphosphate + H(+). This chain is Phenylalanine--tRNA ligase alpha subunit, found in Macrococcus caseolyticus (strain JCSC5402) (Macrococcoides caseolyticum).